A 236-amino-acid polypeptide reads, in one-letter code: Ring protein 1 (236 aa).

As to quaternary structure, homododecamer.

The protein resides in the virion. Forms the tail multi-ring barrel with ring protein 2, ring protein 3 and ring protein 4. The chain is Ring protein 1 from Bacteroides intestinalis (Bacteroides phage PhiCrAss001).